Here is a 503-residue protein sequence, read N- to C-terminus: Cobyric acid synthase (503 aa).

The 200-residue stretch at 251 to 450 folds into the GATase cobBQ-type domain; it reads DLDIAVIRLP…IHGIFENAAF (200 aa). Catalysis depends on Cys331, which acts as the Nucleophile. His442 is a catalytic residue.

This sequence belongs to the CobB/CobQ family. CobQ subfamily.

It functions in the pathway cofactor biosynthesis; adenosylcobalamin biosynthesis. Catalyzes amidations at positions B, D, E, and G on adenosylcobyrinic A,C-diamide. NH(2) groups are provided by glutamine, and one molecule of ATP is hydrogenolyzed for each amidation. This chain is Cobyric acid synthase, found in Dehalococcoides mccartyi (strain ATCC BAA-2100 / JCM 16839 / KCTC 5957 / BAV1).